A 1187-amino-acid chain; its full sequence is Disease resistance protein TAO1 (1187 aa).

Residues 38–202 (WLHPVFLSFR…KISKDVSDVL (165 aa)) enclose the TIR domain. Glu-113 is a catalytic residue. The region spanning 217–478 (EAHTTEITSL…FFRRERIETL (262 aa)) is the NB-ARC domain. LRR repeat units lie at residues 498 to 522 (DKSL…GLDI), 611 to 633 (SRKL…KFNP), 635 to 658 (FLVK…PIRN), 660 to 679 (KWMD…FSTA), 680 to 703 (TNLQ…IGNA), 704 to 727 (TNLL…IGNL), 728 to 750 (TNLK…SFGN), 752 to 775 (TSLK…IGNI), 799 to 823 (NTNL…MLNL), 824 to 849 (TRLE…VINL), 870 to 894 (ATNL…IWNI), 895 to 918 (TNLQ…VENA), 920 to 942 (NLQS…IWRI), and 953 to 974 (CSSL…LILD).

It catalyses the reaction NAD(+) + H2O = ADP-D-ribose + nicotinamide + H(+). TIR-NB-LRR receptor-like protein that contributes to disease resistance induced by the Pseudomonas syringae type III effector AvrB. Acts additively with RPM1 to generate a full disease resistance response to P.syringae expressing this type III effector. The sequence is that of Disease resistance protein TAO1 from Arabidopsis thaliana (Mouse-ear cress).